Consider the following 155-residue polypeptide: UPF0735 ACT domain-containing protein CA_C1234 (155 aa).

The ACT domain occupies 79-154 (TISILIEHRR…NVLKVEIVAM (76 aa)).

This sequence belongs to the UPF0735 family.

In Clostridium acetobutylicum (strain ATCC 824 / DSM 792 / JCM 1419 / IAM 19013 / LMG 5710 / NBRC 13948 / NRRL B-527 / VKM B-1787 / 2291 / W), this protein is UPF0735 ACT domain-containing protein CA_C1234.